We begin with the raw amino-acid sequence, 410 residues long: MVLSQRQRDELNRAIADYLRSNGYEEAYSVFKKEAELDVNEELDKKYAGLLEKKWTSVIRLQKKVMELESKLNEAKEEFTSGGPLGQKRDPKEWIPRPPEKYALSGHRSPVTRVIFHPVFSVMVSASEDATIKVWDYETGDFERTLKGHTDSVQDISFDHTGKLLASCSADMTIKLWDFQGFECIRTMHGHDHNVSSVAIMPNGDHIVSASRDKTIKMWEVQTGYCVKTFTGHREWVRMVRPNQDGTLIASCSNDQTVRVWVVATKECKAELREHEHVVECISWAPESSYSTISEATGSETKKSGKPGPFLLSGSRDKTIKMWDISTGMCLMTLVGHDNWVRGVLFHSGGKFILSCADDKTLRVWDFKNKRCMKTLNAHEHFVTSLDFHKTAPYVVTGSVDQTVKVWECR.

The region spanning 7-39 is the LisH domain; it reads QRDELNRAIADYLRSNGYEEAYSVFKKEAELDV. A coiled-coil region spans residues 56–82; sequence TSVIRLQKKVMELESKLNEAKEEFTSG. WD repeat units follow at residues 106–147, 148–187, 190–229, 232–271, 274–333, 336–377, and 378–410; these read GHRS…RTLK, GHTD…CIRT, GHDH…CVKT, GHRE…CKAE, EHEH…CLMT, GHDN…KTLN, and AHEH…WECR.

The protein belongs to the WD repeat LIS1/nudF family. In terms of assembly, can self-associate. Component of the cytosolic PAF-AH (I) heterotetrameric enzyme, which is composed of PAFAH1B1 (beta), PAFAH1B2 (alpha2) and PAFAH1B3 (alpha1) subunits. The catalytic activity of the enzyme resides in the alpha1 (PAFAH1B3) and alpha2 (PAFAH1B2) subunits, whereas the beta subunit (PAFAH1B1) has regulatory activity. Trimer formation is not essential for the catalytic activity. Interacts with dynein, dynactin, NDE1 and NDEL1.

Its subcellular location is the cytoplasm. The protein localises to the cytoskeleton. The protein resides in the microtubule organizing center. It is found in the centrosome. Its function is as follows. Regulatory subunit (beta subunit) of the cytosolic type I platelet-activating factor (PAF) acetylhydrolase (PAF-AH (I)), an enzyme that catalyzes the hydrolyze of the acetyl group at the sn-2 position of PAF and its analogs and participates in PAF inactivation. Regulates the PAF-AH (I) activity in a catalytic dimer composition-dependent manner. Positively regulates the activity of the minus-end directed microtubule motor protein dynein. May enhance dynein-mediated microtubule sliding by targeting dynein to the microtubule plus end. Required for several dynein- and microtubule-dependent processes such as the maintenance of Golgi integrity, the peripheral transport of microtubule fragments and the coupling of the nucleus and centrosome. May be required for proliferation of neuronal precursors and neuronal migration. This Gallus gallus (Chicken) protein is Lissencephaly-1 homolog.